The following is a 248-amino-acid chain: Phosphate import ATP-binding protein PstB (248 aa).

The 243-residue stretch at 1–243 (MAVNDVNVFY…PQHNLTQGYI (243 aa)) folds into the ABC transporter domain. 33 to 40 (GPSGCGKS) contributes to the ATP binding site.

Belongs to the ABC transporter superfamily. Phosphate importer (TC 3.A.1.7) family. As to quaternary structure, the complex is composed of two ATP-binding proteins (PstB), two transmembrane proteins (PstC and PstA) and a solute-binding protein (PstS).

Its subcellular location is the cell inner membrane. The enzyme catalyses phosphate(out) + ATP + H2O = ADP + 2 phosphate(in) + H(+). Part of the ABC transporter complex PstSACB involved in phosphate import. Responsible for energy coupling to the transport system. In Rhodospirillum rubrum (strain ATCC 11170 / ATH 1.1.1 / DSM 467 / LMG 4362 / NCIMB 8255 / S1), this protein is Phosphate import ATP-binding protein PstB.